We begin with the raw amino-acid sequence, 367 residues long: Beta sliding clamp (367 aa).

This sequence belongs to the beta sliding clamp family. As to quaternary structure, forms a ring-shaped head-to-tail homodimer around DNA which binds and tethers DNA polymerases and other proteins to the DNA. The DNA replisome complex has a single clamp-loading complex (3 tau and 1 each of delta, delta', psi and chi subunits) which binds 3 Pol III cores (1 core on the leading strand and 2 on the lagging strand) each with a beta sliding clamp dimer. Additional proteins in the replisome are other copies of gamma, psi and chi, Ssb, DNA helicase and RNA primase.

The protein resides in the cytoplasm. Functionally, confers DNA tethering and processivity to DNA polymerases and other proteins. Acts as a clamp, forming a ring around DNA (a reaction catalyzed by the clamp-loading complex) which diffuses in an ATP-independent manner freely and bidirectionally along dsDNA. Initially characterized for its ability to contact the catalytic subunit of DNA polymerase III (Pol III), a complex, multichain enzyme responsible for most of the replicative synthesis in bacteria; Pol III exhibits 3'-5' exonuclease proofreading activity. The beta chain is required for initiation of replication as well as for processivity of DNA replication. This Proteus mirabilis protein is Beta sliding clamp (dnaN).